Consider the following 427-residue polypeptide: 3-phosphoshikimate 1-carboxyvinyltransferase (427 aa).

Position 20 (lysine 20) interacts with phosphoenolpyruvate. Residues serine 21 and arginine 25 each coordinate 3-phosphoshikimate. Residues glycine 92 and arginine 120 each coordinate phosphoenolpyruvate. 5 residues coordinate 3-phosphoshikimate: serine 166, alanine 167, glutamine 168, aspartate 312, and lysine 339. Glutamine 168 is a binding site for phosphoenolpyruvate. The Proton acceptor role is filled by aspartate 312. Phosphoenolpyruvate is bound by residues arginine 343 and arginine 385.

In terms of assembly, homotetramer.

The protein resides in the cytoplasm. It catalyses the reaction 3-phosphoshikimate + phosphoenolpyruvate = 5-O-(1-carboxyvinyl)-3-phosphoshikimate + phosphate. It functions in the pathway metabolic intermediate biosynthesis; chorismate biosynthesis; chorismate from D-erythrose 4-phosphate and phosphoenolpyruvate: step 6/7. With respect to regulation, competitively inhibited by glyphosate. Activated by ammonium, rubidium or potassium ions. Functionally, catalyzes the transfer of the enolpyruvyl moiety of phosphoenolpyruvate (PEP) to the 5-hydroxyl of shikimate-3-phosphate (S3P) to produce enolpyruvyl shikimate-3-phosphate and inorganic phosphate. The protein is 3-phosphoshikimate 1-carboxyvinyltransferase of Streptococcus pneumoniae serotype 4 (strain ATCC BAA-334 / TIGR4).